The primary structure comprises 321 residues: Glucokinase (321 aa).

8-13 (GDVGGT) contributes to the ATP binding site.

The protein belongs to the bacterial glucokinase family.

Its subcellular location is the cytoplasm. It catalyses the reaction D-glucose + ATP = D-glucose 6-phosphate + ADP + H(+). Its function is as follows. Not highly important in E.coli as glucose is transported into the cell by the PTS system already as glucose 6-phosphate. The protein is Glucokinase of Escherichia coli O139:H28 (strain E24377A / ETEC).